A 489-amino-acid chain; its full sequence is Rhamnulokinase (489 aa).

ATP is bound at residue 13 to 17; the sequence is ASSGR. Cys68 and Cys222 are oxidised to a cystine. Substrate contacts are provided by residues Gly83 and 236–238; that span reads HDT. The active-site Proton acceptor is the Asp237. Thr259 is a binding site for ATP. Asn296 is a substrate binding site. Position 304 (Gln304) interacts with ATP. An intrachain disulfide couples Cys353 to Cys370. Gly402 provides a ligand contact to ATP. A disulfide bond links Cys413 and Cys417.

It belongs to the rhamnulokinase family. Mg(2+) is required as a cofactor.

The enzyme catalyses L-rhamnulose + ATP = L-rhamnulose 1-phosphate + ADP + H(+). Its pathway is carbohydrate degradation; L-rhamnose degradation; glycerone phosphate from L-rhamnose: step 2/3. In terms of biological role, involved in the catabolism of L-rhamnose (6-deoxy-L-mannose). Catalyzes the transfer of the gamma-phosphate group from ATP to the 1-hydroxyl group of L-rhamnulose to yield L-rhamnulose 1-phosphate. The protein is Rhamnulokinase of Shigella flexneri serotype 5b (strain 8401).